Reading from the N-terminus, the 226-residue chain is Sugar fermentation stimulation protein homolog (226 aa).

Belongs to the SfsA family.

The sequence is that of Sugar fermentation stimulation protein homolog from Clostridium beijerinckii (strain ATCC 51743 / NCIMB 8052) (Clostridium acetobutylicum).